Reading from the N-terminus, the 476-residue chain is Eukaryotic translation initiation factor 3 subunit L (476 aa).

The PCI domain maps to Asp257–Leu452.

Belongs to the eIF-3 subunit L family. Component of the eukaryotic translation initiation factor 3 (eIF-3) complex.

The protein localises to the cytoplasm. Functionally, component of the eukaryotic translation initiation factor 3 (eIF-3) complex, which is involved in protein synthesis of a specialized repertoire of mRNAs and, together with other initiation factors, stimulates binding of mRNA and methionyl-tRNAi to the 40S ribosome. The eIF-3 complex specifically targets and initiates translation of a subset of mRNAs involved in cell proliferation. This Aspergillus fumigatus (strain CBS 144.89 / FGSC A1163 / CEA10) (Neosartorya fumigata) protein is Eukaryotic translation initiation factor 3 subunit L.